Reading from the N-terminus, the 150-residue chain is MGKSILLINGPNLNLLGTREPQIYGSTTLADVEASCKAHAESLGATLATFQSNHEGAIIDRIQAARGNVDGIVINPGAFTHTSVAIRDALLGVGIPFIELHVSNVHAREPWRHHSYFSDKAAGIIVGLGVYGYKVAVEHVALNFKERAIL.

The Proton acceptor role is filled by Tyr-24. 3 residues coordinate substrate: Asn-75, His-81, and Asp-88. His-101 functions as the Proton donor in the catalytic mechanism. Substrate contacts are provided by residues 102 to 103 (VS) and Arg-112.

The protein belongs to the type-II 3-dehydroquinase family. As to quaternary structure, homododecamer. Adopts a ring-like structure, composed of an arrangement of two hexameric rings stacked on top of one another.

The enzyme catalyses 3-dehydroquinate = 3-dehydroshikimate + H2O. The protein operates within aromatic compound metabolism; 3,4-dihydroxybenzoate biosynthesis; 3,4-dihydroxybenzoate from 3-dehydroquinate: step 1/2. Functionally, is involved in the catabolism of quinate. Allows the utilization of quinate as carbon source via the beta-ketoadipate pathway. This chain is Catabolic 3-dehydroquinase 1, found in Neosartorya fischeri (strain ATCC 1020 / DSM 3700 / CBS 544.65 / FGSC A1164 / JCM 1740 / NRRL 181 / WB 181) (Aspergillus fischerianus).